The chain runs to 197 residues: Phospholipid hydroperoxide glutathione peroxidase (197 aa).

At Ser-40 the chain carries Phosphoserine. Residue Sec-73 is part of the active site. Residue Sec-73 is a non-standard amino acid, selenocysteine.

Belongs to the glutathione peroxidase family. Monomer. Has a tendency to form higher mass oligomers. Interacts with FUNDC1; this interaction promotes GPX4 recruitment into mitochondria through TOM/TIM complex where it is degraded by mitophagy.

It localises to the mitochondrion. The protein localises to the cytoplasm. The enzyme catalyses a hydroperoxy polyunsaturated fatty acid + 2 glutathione = a hydroxy polyunsaturated fatty acid + glutathione disulfide + H2O. It carries out the reaction 2 glutathione + H2O2 = glutathione disulfide + 2 H2O. The catalysed reaction is tert-butyl hydroperoxide + 2 glutathione = tert-butanol + glutathione disulfide + H2O. It catalyses the reaction cumene hydroperoxide + 2 glutathione = 2-phenylpropan-2-ol + glutathione disulfide + H2O. The enzyme catalyses (9S)-hydroperoxy-(10E,12Z)-octadecadienoate + 2 glutathione = (9S)-hydroxy-(10E,12Z)-octadecadienoate + glutathione disulfide + H2O. It carries out the reaction (13S)-hydroperoxy-(9Z,11E)-octadecadienoate + 2 glutathione = (13S)-hydroxy-(9Z,11E)-octadecadienoate + glutathione disulfide + H2O. The catalysed reaction is (5S)-hydroperoxy-(6E,8Z,11Z,14Z)-eicosatetraenoate + 2 glutathione = (5S)-hydroxy-(6E,8Z,11Z,14Z)-eicosatetraenoate + glutathione disulfide + H2O. It catalyses the reaction (12R)-hydroperoxy-(5Z,8Z,10E,14Z)-eicosatetraenoate + 2 glutathione = (12R)-hydroxy-(5Z,8Z,10E,14Z)-eicosatetraenoate + glutathione disulfide + H2O. The enzyme catalyses (12S)-hydroperoxy-(5Z,8Z,10E,14Z)-eicosatetraenoate + 2 glutathione = (12S)-hydroxy-(5Z,8Z,10E,14Z)-eicosatetraenoate + glutathione disulfide + H2O. It carries out the reaction (15S)-hydroperoxy-(5Z,8Z,11Z,13E)-eicosatetraenoate + 2 glutathione = (15S)-hydroxy-(5Z,8Z,11Z,13E)-eicosatetraenoate + glutathione disulfide + H2O. The catalysed reaction is (5S)-hydroperoxy-(6E,8Z,11Z,14Z,17Z)-eicosapentaenoate + 2 glutathione = (5S)-hydroxy-(6E,8Z,11Z,14Z,17Z)-eicosapentaenoate + glutathione disulfide + H2O. It catalyses the reaction (12S)-hydroperoxy-(5Z,8Z,10E,14Z,17Z)-eicosapentaenoate + 2 glutathione = (12S)-hydroxy-(5Z,8Z,10E,14Z,17Z)-eicosapentaenoate + glutathione disulfide + H2O. The enzyme catalyses (15S)-hydroperoxy-(5Z,8Z,11Z,13E,17Z)-eicosapentaenoate + 2 glutathione = (15S)-hydroxy-(5Z,8Z,11Z,13E,17Z)-eicosapentaenoate + glutathione disulfide + H2O. It carries out the reaction (15S)-hydroperoxy-(11Z,13E)-eicosadienoate + 2 glutathione = (15S)-hydroxy-(11Z,13E)-eicosadienoate + glutathione disulfide + H2O. The catalysed reaction is (17S)-hydroperoxy-(4Z,7Z,10Z,13Z,15E,19Z)-docosahexaenoate + 2 glutathione = (17S)-hydroxy-(4Z,7Z,10Z,13Z,15E,19Z)-docosahexaenoate + glutathione disulfide + H2O. It catalyses the reaction a hydroperoxy-1,2-diacyl-glycero-3-phosphocholine + 2 glutathione = a hydroxy-1,2-diacyl-glycero-3-phosphocholine + glutathione disulfide + H2O. Functionally, essential antioxidant peroxidase that directly reduces phospholipid hydroperoxide even if they are incorporated in membranes and lipoproteins. Can also reduce fatty acid hydroperoxide, cholesterol hydroperoxide and thymine hydroperoxide. Plays a key role in protecting cells from oxidative damage by preventing membrane lipid peroxidation. Required to prevent cells from ferroptosis, a non-apoptotic cell death resulting from an iron-dependent accumulation of lipid reactive oxygen species. The presence of selenocysteine (Sec) versus Cys at the active site is essential for life: it provides resistance to overoxidation and prevents cells against ferroptosis. The presence of Sec at the active site is also essential for the survival of a specific type of parvalbumin-positive interneurons, thereby preventing against fatal epileptic seizures. May be required to protect cells from the toxicity of ingested lipid hydroperoxides. Required for normal sperm development and male fertility. Essential for maturation and survival of photoreceptor cells. Plays a role in a primary T-cell response to viral and parasitic infection by protecting T-cells from ferroptosis and by supporting T-cell expansion. Plays a role of glutathione peroxidase in platelets in the arachidonic acid metabolism. Reduces hydroperoxy ester lipids formed by a 15-lipoxygenase that may play a role as down-regulator of the cellular 15-lipoxygenase pathway. Can also reduce small soluble hydroperoxides such as H2O2, cumene hydroperoxide and tert-butyl hydroperoxide. The polypeptide is Phospholipid hydroperoxide glutathione peroxidase (Sus scrofa (Pig)).